A 711-amino-acid polypeptide reads, in one-letter code: DNA topoisomerase 3 (711 aa).

In terms of domain architecture, Toprim spans 2 to 135 (KSLILAEKPS…IKRLWISSVT (134 aa)). Mg(2+) is bound by residues Glu8 and Asp104. The Topo IA-type catalytic domain maps to 152–580 (YQNLYEAALA…EMKNFTFKVV (429 aa)). An interaction with DNA region spans residues 186–191 (SLGRVQ). The O-(5'-phospho-DNA)-tyrosine intermediate role is filled by Tyr305.

It belongs to the type IA topoisomerase family. Mg(2+) is required as a cofactor.

It carries out the reaction ATP-independent breakage of single-stranded DNA, followed by passage and rejoining.. Releases the supercoiling and torsional tension of DNA, which is introduced during the DNA replication and transcription, by transiently cleaving and rejoining one strand of the DNA duplex. Introduces a single-strand break via transesterification at a target site in duplex DNA. The scissile phosphodiester is attacked by the catalytic tyrosine of the enzyme, resulting in the formation of a DNA-(5'-phosphotyrosyl)-enzyme intermediate and the expulsion of a 3'-OH DNA strand. The free DNA strand then undergoes passage around the unbroken strand, thus removing DNA supercoils. Finally, in the religation step, the DNA 3'-OH attacks the covalent intermediate to expel the active-site tyrosine and restore the DNA phosphodiester backbone. The sequence is that of DNA topoisomerase 3 from Staphylococcus epidermidis (strain ATCC 12228 / FDA PCI 1200).